The primary structure comprises 318 residues: Taste receptor type 2 member 60 (318 aa).

Over 1–7 (MNGDHMV) the chain is Extracellular. Residues 8 to 28 (LGSSMTDEKAIILVIILLLLC) form a helical membrane-spanning segment. At 29 to 40 (LVAIAGNCFITA) the chain is on the cytoplasmic side. A helical membrane pass occupies residues 41-61 (ALGMEWVLQRMLLPCDKLLVS). The Extracellular portion of the chain corresponds to 62–88 (LGASRFCPQWVVMGKTTYVFLYPTAFP). The chain crosses the membrane as a helical span at residues 89 to 109 (YNPVLRFLAFQWDLLNAATLW). Topologically, residues 110–128 (FSTWLSVFYCVKIATFTHP) are cytoplasmic. A helical transmembrane segment spans residues 129-149 (VFLWLKHKLSEWVPWMLFSSV). The Extracellular portion of the chain corresponds to 150 to 183 (GLSSFTTILFFIGNHRVYQSYLRNHLQPWNVTGN). N179 carries an N-linked (GlcNAc...) asparagine glycan. The helical transmembrane segment at 184 to 204 (SIWSYCEKFYLFPLKMITWTM) threads the bilayer. Topologically, residues 205 to 234 (PTAVFFICMILLITSLGRHMKKALLTNSGF) are cytoplasmic. Residues 235 to 255 (RDPSVQAHIKAMLALLSFAML) traverse the membrane as a helical segment. Residues 256–264 (FISYFLSLV) are Extracellular-facing. The chain crosses the membrane as a helical span at residues 265–285 (FSAAGIFPPLDFKFWVWESVI). At 286–318 (YLCAAVHPIILLFSNRRLRAVLKRCRSSRCGTP) the chain is on the cytoplasmic side.

The protein belongs to the G-protein coupled receptor T2R family.

The protein localises to the membrane. Functionally, receptor that may play a role in the perception of bitterness and is gustducin-linked. May play a role in sensing the chemical composition of the gastrointestinal content. The activity of this receptor may stimulate alpha gustducin, mediate PLC-beta-2 activation and lead to the gating of TRPM5. In Pongo pygmaeus (Bornean orangutan), this protein is Taste receptor type 2 member 60 (TAS2R60).